The primary structure comprises 117 residues: Large ribosomal subunit protein bL20 (117 aa).

Belongs to the bacterial ribosomal protein bL20 family.

Binds directly to 23S ribosomal RNA and is necessary for the in vitro assembly process of the 50S ribosomal subunit. It is not involved in the protein synthesizing functions of that subunit. This chain is Large ribosomal subunit protein bL20, found in Aliivibrio fischeri (strain ATCC 700601 / ES114) (Vibrio fischeri).